A 463-amino-acid polypeptide reads, in one-letter code: Fumarate hydratase class II (463 aa).

Residues 97–99 (SGT), R125, 128–131 (HPND), 138–140 (SSN), and T186 contribute to the substrate site. The segment covering 121-134 (RGEGRKVHPNDHVN) has biased composition (basic and acidic residues). The disordered stretch occupies residues 121–142 (RGEGRKVHPNDHVNRGQSSNDT). Residue H187 is the Proton donor/acceptor of the active site. S317 is a catalytic residue. Substrate is bound by residues S318 and 323-325 (KVN).

This sequence belongs to the class-II fumarase/aspartase family. Fumarase subfamily. In terms of assembly, homotetramer.

It localises to the cytoplasm. It carries out the reaction (S)-malate = fumarate + H2O. It functions in the pathway carbohydrate metabolism; tricarboxylic acid cycle; (S)-malate from fumarate: step 1/1. Its function is as follows. Involved in the TCA cycle. Catalyzes the stereospecific interconversion of fumarate to L-malate. This Bordetella bronchiseptica (strain ATCC BAA-588 / NCTC 13252 / RB50) (Alcaligenes bronchisepticus) protein is Fumarate hydratase class II.